The sequence spans 399 residues: Nicotinate phosphoribosyltransferase (399 aa).

His-217 carries the phosphohistidine; by autocatalysis modification.

It belongs to the NAPRTase family. Post-translationally, transiently phosphorylated on a His residue during the reaction cycle. Phosphorylation strongly increases the affinity for substrates and increases the rate of nicotinate D-ribonucleotide production. Dephosphorylation regenerates the low-affinity form of the enzyme, leading to product release.

It catalyses the reaction nicotinate + 5-phospho-alpha-D-ribose 1-diphosphate + ATP + H2O = nicotinate beta-D-ribonucleotide + ADP + phosphate + diphosphate. The protein operates within cofactor biosynthesis; NAD(+) biosynthesis; nicotinate D-ribonucleotide from nicotinate: step 1/1. In terms of biological role, catalyzes the synthesis of beta-nicotinate D-ribonucleotide from nicotinate and 5-phospho-D-ribose 1-phosphate at the expense of ATP. The protein is Nicotinate phosphoribosyltransferase of Burkholderia mallei (strain ATCC 23344).